A 418-amino-acid chain; its full sequence is Serine hydroxymethyltransferase (418 aa).

Residues Leu121 and 125–127 (GHL) contribute to the (6S)-5,6,7,8-tetrahydrofolate site. Lys230 bears the N6-(pyridoxal phosphate)lysine mark. Residue 355 to 357 (SPF) participates in (6S)-5,6,7,8-tetrahydrofolate binding.

This sequence belongs to the SHMT family. In terms of assembly, homodimer. It depends on pyridoxal 5'-phosphate as a cofactor.

It localises to the cytoplasm. The catalysed reaction is (6R)-5,10-methylene-5,6,7,8-tetrahydrofolate + glycine + H2O = (6S)-5,6,7,8-tetrahydrofolate + L-serine. The protein operates within one-carbon metabolism; tetrahydrofolate interconversion. Its pathway is amino-acid biosynthesis; glycine biosynthesis; glycine from L-serine: step 1/1. Its function is as follows. Catalyzes the reversible interconversion of serine and glycine with tetrahydrofolate (THF) serving as the one-carbon carrier. This reaction serves as the major source of one-carbon groups required for the biosynthesis of purines, thymidylate, methionine, and other important biomolecules. Also exhibits THF-independent aldolase activity toward beta-hydroxyamino acids, producing glycine and aldehydes, via a retro-aldol mechanism. The polypeptide is Serine hydroxymethyltransferase (Alcanivorax borkumensis (strain ATCC 700651 / DSM 11573 / NCIMB 13689 / SK2)).